We begin with the raw amino-acid sequence, 216 residues long: MEVLTKEALLVKNALLNKGIETPFKKIYEKNKPDIHKISKYIKKIMDLLNLDLNNDSLSKTPNRIAYMYIEEIFSGLNYNNFPKITLIKNTSKINDLITVNNIVLNSTCEHHFLIFEGKAIVSYIPDKILIGLSKINRIVDFFSKRPQIQERLTNQILVAIQILLDTKNVAVAIKAKHLCVKARGIKDSHSKTLTLSLGGVFKSKQNIKKEFLKDF.

Residues Cys109, His112, and Cys180 each coordinate Zn(2+).

It belongs to the GTP cyclohydrolase I family. In terms of assembly, toroid-shaped homodecamer, composed of two pentamers of five dimers.

It catalyses the reaction GTP + H2O = 7,8-dihydroneopterin 3'-triphosphate + formate + H(+). It functions in the pathway cofactor biosynthesis; 7,8-dihydroneopterin triphosphate biosynthesis; 7,8-dihydroneopterin triphosphate from GTP: step 1/1. The polypeptide is GTP cyclohydrolase 1 (Wigglesworthia glossinidia brevipalpis).